The primary structure comprises 833 residues: Ribosome biogenesis protein BOP1 homolog (833 aa).

The disordered stretch occupies residues 20–202 (NKKSEPIAVS…DSDDSSEDES (183 aa)). Low complexity predominate over residues 36–56 (SKPTTTATTTVSKSPVSTITT). Composition is skewed to acidic residues over residues 90 to 111 (SEDD…EDVE) and 136 to 150 (EAEE…EDDS). Low complexity predominate over residues 154 to 170 (SSKSSSSTTTTTTTTKK). Positions 182-192 (KQWTNDPNQFY) are enriched in polar residues. Residues 193–202 (DSDDSSEDES) are compositionally biased toward acidic residues. 3 WD repeats span residues 331 to 370 (TKAI…KEKT), 488 to 527 (GHKA…CLYS), and 529 to 569 (EVES…TQTE). The tract at residues 568–592 (TEHSPETEKILTKPPTDSSTEQQQN) is disordered. The span at 582-592 (PTDSSTEQQQN) shows a compositional bias: polar residues. WD repeat units lie at residues 618–660 (HHPF…TQSP), 663–701 (KSKT…LIKK), 704–743 (TGCR…RPYK), 747–786 (YHKM…DLLQ), and 802–833 (INDL…LYTN).

The protein belongs to the WD repeat BOP1/ERB1 family.

The protein localises to the nucleus. The protein resides in the nucleolus. Its subcellular location is the nucleoplasm. Its function is as follows. Required for maturation of ribosomal RNAs and formation of the large ribosomal subunit. The sequence is that of Ribosome biogenesis protein BOP1 homolog from Dictyostelium discoideum (Social amoeba).